The following is an 844-amino-acid chain: DNA mismatch repair protein MutS (844 aa).

602-609 is a binding site for ATP; it reads GPNMSGKS.

It belongs to the DNA mismatch repair MutS family.

This protein is involved in the repair of mismatches in DNA. It is possible that it carries out the mismatch recognition step. This protein has a weak ATPase activity. This Streptococcus pneumoniae (strain ATCC 700669 / Spain 23F-1) protein is DNA mismatch repair protein MutS.